Here is a 511-residue protein sequence, read N- to C-terminus: Maturase K (511 aa).

The protein belongs to the intron maturase 2 family. MatK subfamily.

The protein resides in the plastid. It localises to the chloroplast. Its function is as follows. Usually encoded in the trnK tRNA gene intron. Probably assists in splicing its own and other chloroplast group II introns. The polypeptide is Maturase K (Campsis radicans (Trumpet creeper)).